A 503-amino-acid chain; its full sequence is Probable cytosol aminopeptidase (503 aa).

K274 and D279 together coordinate Mn(2+). Residue K286 is part of the active site. Residues D297, D356, and E358 each coordinate Mn(2+). Residue R360 is part of the active site.

The protein belongs to the peptidase M17 family. Requires Mn(2+) as cofactor.

It localises to the cytoplasm. The catalysed reaction is Release of an N-terminal amino acid, Xaa-|-Yaa-, in which Xaa is preferably Leu, but may be other amino acids including Pro although not Arg or Lys, and Yaa may be Pro. Amino acid amides and methyl esters are also readily hydrolyzed, but rates on arylamides are exceedingly low.. The enzyme catalyses Release of an N-terminal amino acid, preferentially leucine, but not glutamic or aspartic acids.. In terms of biological role, presumably involved in the processing and regular turnover of intracellular proteins. Catalyzes the removal of unsubstituted N-terminal amino acids from various peptides. The sequence is that of Probable cytosol aminopeptidase from Burkholderia orbicola (strain MC0-3).